A 503-amino-acid polypeptide reads, in one-letter code: ESX-5 secretion system protein EccD5 (503 aa).

10 consecutive transmembrane segments (helical) span residues 137–157 (VVAV…ASGV), 169–189 (LTTI…MMLL), 200–220 (VADI…ASAP), 224–244 (VGSP…ALAL), 250–270 (RLAI…ASLS), 272–292 (MVAA…CVVM), 359–379 (FLSG…TSLC), 414–434 (ITLA…YALV), 443–463 (IVAS…AVVP), and 480–500 (YLCL…YAAI).

The protein belongs to the EccD/Snm4 family. Part of the ESX-5 / type VII secretion system (T7SS), which is composed of cytosolic and membrane components. The ESX-5 membrane complex is composed of EccB5, EccC5, EccD5 and EccE5.

The protein resides in the cell inner membrane. Part of the ESX-5 specialized secretion system, which is responsible for the secretion of EsxN and a number of PE_PGRS and PPE proteins. This component is essential for ESX-5 complex stability and secretion. The protein is ESX-5 secretion system protein EccD5 of Mycobacterium marinum (strain ATCC BAA-535 / M).